A 573-amino-acid chain; its full sequence is IRHESTVTGGVQDVYGEDSATEDQSITPWTLSVASGFSLLRNPHYNKGLAFSERERDTHYLRGLLPPVVISHDLQVKKMMNSIRKYDVPLQRYMAMMDLQEMNERLFYKLLIDNVEELLPIVYTPTVGEACQKYGWIFKRPQGLFFSLKEKGKIHEVLKNWPEKKIQVIVVTDGERILGLGDLGCQGMGIPVGKLSLYSALGGIRPSACLPVTIDVGQTMKFVDDEFYIGLRQRRATGQEYSELLDEFMYAVKQNYGEKVLIQFEDFANHNAFNLLAKYGTSHLVFNDDIQGTASVVLAGLMAALNLVGGSLSEHTFLFLGAGEAGTGIAELIALEMSKQTGIPLEETRKKIWMVDSKGLIVKSRMEMLQHFKRPWAHDHEPVQELVNAVKSIKPTVLIGSSGAGRTFTKEVVQAMATFNEKPIIFALSNPTSQSECTAEEAYSWSEGRAIFASGSPFAPVEYNGKVYASGQANNAYIFPGFGLGLIISGAIRVHDDMLLVASEALADEVSQENFEKGTHIPPFSNIRKISAHIAKVAAKAYELGLATRLPQPKDLVAYAESCMYSPAYRSYR.

Y123 functions as the Proton donor in the catalytic mechanism. Residue R176 participates in NAD(+) binding. The active-site Proton acceptor is K194. A divalent metal cation is bound by residues E265, D266, and D289. Residue D289 participates in NAD(+) binding. Residue 318-334 (LFLGAGEAGTGIAELIA) coordinates NADP(+). N430 contacts NAD(+).

The protein belongs to the malic enzymes family. As to quaternary structure, homotetramer. It depends on Mg(2+) as a cofactor. Requires Mn(2+) as cofactor.

It localises to the plastid. The protein resides in the chloroplast. The catalysed reaction is (S)-malate + NADP(+) = pyruvate + CO2 + NADPH. It catalyses the reaction oxaloacetate + H(+) = pyruvate + CO2. It functions in the pathway photosynthesis; C4 acid pathway. In terms of biological role, the chloroplastic ME isoform decarboxylates malate shuttled from neighboring mesophyll cells. The CO(2) released is then refixed by ribulose-bisphosphate carboxylase. This pathway eliminates the photorespiratory loss of CO(2) that occurs in most plants. The polypeptide is NADP-dependent malic enzyme, chloroplastic (Solanum lycopersicum (Tomato)).